The primary structure comprises 179 residues: uncharacterized protein (179 aa).

Basic and acidic residues predominate over residues 1 to 14 (MTKKVKLDQDEINN). Disordered stretches follow at residues 1–90 (MTKK…NNFC) and 121–147 (HKKS…DKKV). Composition is skewed to low complexity over residues 15-90 (KNKN…NNFC) and 126-137 (RSQSQSSLNSFD). Residues 138 to 147 (QDNKSKDKKV) are compositionally biased toward basic and acidic residues.

This is an uncharacterized protein from Dictyostelium discoideum (Social amoeba).